An 80-amino-acid polypeptide reads, in one-letter code: Acyl carrier protein (80 aa).

Positions 1–79 constitute a Carrier domain; the sequence is MTEEEIFNKI…EAVEYIKSHQ (79 aa). At Ser-39 the chain carries O-(pantetheine 4'-phosphoryl)serine.

It belongs to the acyl carrier protein (ACP) family. 4'-phosphopantetheine is transferred from CoA to a specific serine of apo-ACP by AcpS. This modification is essential for activity because fatty acids are bound in thioester linkage to the sulfhydryl of the prosthetic group.

It is found in the cytoplasm. Its pathway is lipid metabolism; fatty acid biosynthesis. In terms of biological role, carrier of the growing fatty acid chain in fatty acid biosynthesis. The protein is Acyl carrier protein of Lactobacillus johnsonii (strain CNCM I-12250 / La1 / NCC 533).